Consider the following 333-residue polypeptide: Anthranilate phosphoribosyltransferase (333 aa).

Residues glycine 80, 83 to 84 (GD), serine 88, 90 to 93 (NIST), 108 to 116 (KHGNRSVSS), and serine 120 contribute to the 5-phospho-alpha-D-ribose 1-diphosphate site. Residue glycine 80 coordinates anthranilate. Mg(2+) is bound at residue serine 92. Anthranilate is bound at residue asparagine 111. Arginine 166 is a binding site for anthranilate. Residues aspartate 224 and glutamate 225 each contribute to the Mg(2+) site.

This sequence belongs to the anthranilate phosphoribosyltransferase family. Homodimer. It depends on Mg(2+) as a cofactor.

The enzyme catalyses N-(5-phospho-beta-D-ribosyl)anthranilate + diphosphate = 5-phospho-alpha-D-ribose 1-diphosphate + anthranilate. It functions in the pathway amino-acid biosynthesis; L-tryptophan biosynthesis; L-tryptophan from chorismate: step 2/5. Catalyzes the transfer of the phosphoribosyl group of 5-phosphorylribose-1-pyrophosphate (PRPP) to anthranilate to yield N-(5'-phosphoribosyl)-anthranilate (PRA). The sequence is that of Anthranilate phosphoribosyltransferase from Yersinia pseudotuberculosis serotype O:1b (strain IP 31758).